The sequence spans 251 residues: Ubiquinone/menaquinone biosynthesis C-methyltransferase UbiE (251 aa).

Residues Thr74, Asp95, and 123–124 (NA) contribute to the S-adenosyl-L-methionine site.

It belongs to the class I-like SAM-binding methyltransferase superfamily. MenG/UbiE family.

The enzyme catalyses a 2-demethylmenaquinol + S-adenosyl-L-methionine = a menaquinol + S-adenosyl-L-homocysteine + H(+). The catalysed reaction is a 2-methoxy-6-(all-trans-polyprenyl)benzene-1,4-diol + S-adenosyl-L-methionine = a 5-methoxy-2-methyl-3-(all-trans-polyprenyl)benzene-1,4-diol + S-adenosyl-L-homocysteine + H(+). The protein operates within quinol/quinone metabolism; menaquinone biosynthesis; menaquinol from 1,4-dihydroxy-2-naphthoate: step 2/2. It participates in cofactor biosynthesis; ubiquinone biosynthesis. Methyltransferase required for the conversion of demethylmenaquinol (DMKH2) to menaquinol (MKH2) and the conversion of 2-polyprenyl-6-methoxy-1,4-benzoquinol (DDMQH2) to 2-polyprenyl-3-methyl-6-methoxy-1,4-benzoquinol (DMQH2). The polypeptide is Ubiquinone/menaquinone biosynthesis C-methyltransferase UbiE (Shewanella piezotolerans (strain WP3 / JCM 13877)).